Reading from the N-terminus, the 122-residue chain is Large ribosomal subunit protein uL14 (122 aa).

It belongs to the universal ribosomal protein uL14 family. In terms of assembly, part of the 50S ribosomal subunit. Forms a cluster with proteins L3 and L19. In the 70S ribosome, L14 and L19 interact and together make contacts with the 16S rRNA in bridges B5 and B8.

Functionally, binds to 23S rRNA. Forms part of two intersubunit bridges in the 70S ribosome. The chain is Large ribosomal subunit protein uL14 from Caldicellulosiruptor saccharolyticus (strain ATCC 43494 / DSM 8903 / Tp8T 6331).